Here is a 246-residue protein sequence, read N- to C-terminus: Azurocidin (246 aa).

Residues 1–19 form the signal peptide; it reads MPALRFLALLASLLATSRV. A propeptide spanning residues 20–26 is cleaved from the precursor; the sequence is GLATLAD. The 216-residue stretch at 27-242 folds into the Peptidase S1 domain; that stretch reads IVGGRRAQPQ…FRNWIDSVLN (216 aa). Residues Cys52 and Cys68 are joined by a disulfide bond. Residues Asn139 and Asn170 are each glycosylated (N-linked (GlcNAc...) asparagine). 2 disulfides stabilise this stretch: Cys148/Cys205 and Cys178/Cys184. Residues 245–246 constitute a propeptide that is removed on maturation; it reads PA.

Belongs to the peptidase S1 family. Elastase subfamily.

It localises to the cytoplasmic granule membrane. Its function is as follows. This is a neutrophil granule-derived antibacterial and monocyte- and fibroblast-specific chemotactic glycoprotein. Binds heparin. The sequence is that of Azurocidin from Sus scrofa (Pig).